We begin with the raw amino-acid sequence, 480 residues long: tRNA-2-methylthio-N(6)-dimethylallyladenosine synthase (480 aa).

Positions 29 to 145 (GSFWIQTFGC…LEALLTQVDN (117 aa)) constitute an MTTase N-terminal domain. [4Fe-4S] cluster contacts are provided by C38, C74, C108, C180, C184, and C187. The Radical SAM core domain maps to 166 to 403 (RDSTICAWVN…NALVERVALQ (238 aa)). The TRAM domain maps to 406–474 (SRYSGKVEQV…AFSLSGTPCD (69 aa)).

The protein belongs to the methylthiotransferase family. MiaB subfamily. In terms of assembly, monomer. Requires [4Fe-4S] cluster as cofactor.

Its subcellular location is the cytoplasm. The enzyme catalyses N(6)-dimethylallyladenosine(37) in tRNA + (sulfur carrier)-SH + AH2 + 2 S-adenosyl-L-methionine = 2-methylsulfanyl-N(6)-dimethylallyladenosine(37) in tRNA + (sulfur carrier)-H + 5'-deoxyadenosine + L-methionine + A + S-adenosyl-L-homocysteine + 2 H(+). In terms of biological role, catalyzes the methylthiolation of N6-(dimethylallyl)adenosine (i(6)A), leading to the formation of 2-methylthio-N6-(dimethylallyl)adenosine (ms(2)i(6)A) at position 37 in tRNAs that read codons beginning with uridine. The chain is tRNA-2-methylthio-N(6)-dimethylallyladenosine synthase from Prochlorococcus marinus (strain MIT 9303).